A 329-amino-acid polypeptide reads, in one-letter code: Glycerol-3-phosphate dehydrogenase [NAD(P)+] (329 aa).

NADPH contacts are provided by tryptophan 11, arginine 30, and lysine 103. Sn-glycerol 3-phosphate is bound by residues lysine 103, glycine 132, and serine 134. An NADPH-binding site is contributed by alanine 136. 5 residues coordinate sn-glycerol 3-phosphate: lysine 187, aspartate 240, serine 250, arginine 251, and asparagine 252. Residue lysine 187 is the Proton acceptor of the active site. NADPH is bound at residue arginine 251. Residues valine 275 and glutamate 277 each coordinate NADPH.

Belongs to the NAD-dependent glycerol-3-phosphate dehydrogenase family.

The protein resides in the cytoplasm. It catalyses the reaction sn-glycerol 3-phosphate + NAD(+) = dihydroxyacetone phosphate + NADH + H(+). The enzyme catalyses sn-glycerol 3-phosphate + NADP(+) = dihydroxyacetone phosphate + NADPH + H(+). Its pathway is membrane lipid metabolism; glycerophospholipid metabolism. Functionally, catalyzes the reduction of the glycolytic intermediate dihydroxyacetone phosphate (DHAP) to sn-glycerol 3-phosphate (G3P), the key precursor for phospholipid synthesis. The protein is Glycerol-3-phosphate dehydrogenase [NAD(P)+] of Nitrosomonas europaea (strain ATCC 19718 / CIP 103999 / KCTC 2705 / NBRC 14298).